Here is a 340-residue protein sequence, read N- to C-terminus: Glycerol-3-phosphate dehydrogenase [NAD(P)+] (340 aa).

The NADPH site is built by Ser11, Trp12, Arg32, Arg33, and Lys106. Sn-glycerol 3-phosphate is bound by residues Lys106, Gly138, and Ser140. Ala142 lines the NADPH pocket. Sn-glycerol 3-phosphate contacts are provided by Lys193, Asp246, Ser256, Arg257, and Asn258. Lys193 (proton acceptor) is an active-site residue. Residue Arg257 coordinates NADPH. NADPH-binding residues include Val281 and Glu283.

It belongs to the NAD-dependent glycerol-3-phosphate dehydrogenase family.

The protein resides in the cytoplasm. It carries out the reaction sn-glycerol 3-phosphate + NAD(+) = dihydroxyacetone phosphate + NADH + H(+). The enzyme catalyses sn-glycerol 3-phosphate + NADP(+) = dihydroxyacetone phosphate + NADPH + H(+). It participates in membrane lipid metabolism; glycerophospholipid metabolism. Catalyzes the reduction of the glycolytic intermediate dihydroxyacetone phosphate (DHAP) to sn-glycerol 3-phosphate (G3P), the key precursor for phospholipid synthesis. In Shouchella clausii (strain KSM-K16) (Alkalihalobacillus clausii), this protein is Glycerol-3-phosphate dehydrogenase [NAD(P)+].